Here is a 304-residue protein sequence, read N- to C-terminus: Ribonuclease Z (304 aa).

Zn(2+) contacts are provided by histidine 63, histidine 65, aspartate 67, histidine 68, histidine 143, aspartate 213, and histidine 271. Catalysis depends on aspartate 67, which acts as the Proton acceptor.

The protein belongs to the RNase Z family. Homodimer. Requires Zn(2+) as cofactor.

It carries out the reaction Endonucleolytic cleavage of RNA, removing extra 3' nucleotides from tRNA precursor, generating 3' termini of tRNAs. A 3'-hydroxy group is left at the tRNA terminus and a 5'-phosphoryl group is left at the trailer molecule.. Its function is as follows. Zinc phosphodiesterase, which displays some tRNA 3'-processing endonuclease activity. Probably involved in tRNA maturation, by removing a 3'-trailer from precursor tRNA. The chain is Ribonuclease Z from Parabacteroides distasonis (strain ATCC 8503 / DSM 20701 / CIP 104284 / JCM 5825 / NCTC 11152).